Reading from the N-terminus, the 207-residue chain is MARYTGPKAKLSRREGTDLFLKSARRSLADKCKLDSKPGQHGRTSGARTSDYGNQLREKQKVKRIYGVLERQFRRYFAEADRRKGNTGETLLQLLESRLDNVVYRMGFGSTRAEARQLVSHKAILVNGQALNVPSAQVKSGDVIAIREKSKKQVRIAESLTLAEQSGFPIWVAVDAKKMEGTFKQAPDRADIAGDINESLIVELYSR.

The segment at 33–54 (KLDSKPGQHGRTSGARTSDYGN) is disordered. A compositionally biased stretch (polar residues) spans 42-53 (GRTSGARTSDYG). An S4 RNA-binding domain is found at 97–157 (SRLDNVVYRM…EKSKKQVRIA (61 aa)).

This sequence belongs to the universal ribosomal protein uS4 family. Part of the 30S ribosomal subunit. Contacts protein S5. The interaction surface between S4 and S5 is involved in control of translational fidelity.

Functionally, one of the primary rRNA binding proteins, it binds directly to 16S rRNA where it nucleates assembly of the body of the 30S subunit. In terms of biological role, with S5 and S12 plays an important role in translational accuracy. This Ralstonia pickettii (strain 12J) protein is Small ribosomal subunit protein uS4.